Reading from the N-terminus, the 477-residue chain is Aspartyl/glutamyl-tRNA(Asn/Gln) amidotransferase subunit B (477 aa).

The protein belongs to the GatB/GatE family. GatB subfamily. As to quaternary structure, heterotrimer of A, B and C subunits.

The enzyme catalyses L-glutamyl-tRNA(Gln) + L-glutamine + ATP + H2O = L-glutaminyl-tRNA(Gln) + L-glutamate + ADP + phosphate + H(+). The catalysed reaction is L-aspartyl-tRNA(Asn) + L-glutamine + ATP + H2O = L-asparaginyl-tRNA(Asn) + L-glutamate + ADP + phosphate + 2 H(+). Functionally, allows the formation of correctly charged Asn-tRNA(Asn) or Gln-tRNA(Gln) through the transamidation of misacylated Asp-tRNA(Asn) or Glu-tRNA(Gln) in organisms which lack either or both of asparaginyl-tRNA or glutaminyl-tRNA synthetases. The reaction takes place in the presence of glutamine and ATP through an activated phospho-Asp-tRNA(Asn) or phospho-Glu-tRNA(Gln). This Lawsonia intracellularis (strain PHE/MN1-00) protein is Aspartyl/glutamyl-tRNA(Asn/Gln) amidotransferase subunit B.